Here is a 143-residue protein sequence, read N- to C-terminus: AP-4 complex subunit sigma (143 aa).

This sequence belongs to the adaptor complexes small subunit family. In terms of assembly, adaptor protein complex 4 (AP-4) is a heterotetramer composed of two large adaptins (epsilon-type subunit and beta-type subunit), a medium adaptin (mu-type subunit) and a small adaptin (sigma-type subunit). Interacts with EHD2.

It localises to the golgi apparatus. The protein localises to the trans-Golgi network. Its subcellular location is the membrane. The protein resides in the coated pit. In terms of biological role, subunit of novel type of clathrin- or non-clathrin-associated protein coat involved in targeting proteins from the trans-Golgi network (TGN) to the endosomal-lysosomal system. The polypeptide is AP-4 complex subunit sigma (Arabidopsis thaliana (Mouse-ear cress)).